We begin with the raw amino-acid sequence, 284 residues long: Probable palmitoyltransferase ZDHHC24 (284 aa).

Over 1 to 18 (MGESWAARGAEGAPARMP) the chain is Cytoplasmic. Residues 19 to 39 (LVLTALWAAVVVLELAYVMVL) traverse the membrane as a helical segment. The Extracellular portion of the chain corresponds to 40–52 (GPGPPPLGPLARA). Residues 53 to 73 (LQLALAAYQLLNLLGNVVLFL) form a helical membrane-spanning segment. At 74–137 (RSDPSIRGVM…GCCVGFHNYR (64 aa)) the chain is on the cytoplasmic side. Residues 94–144 (AYCYQCQSQVPPRSGHCSACRVCILRRDHHCRLLGCCVGFHNYRPFLCLLL) form the DHHC domain. The active-site S-palmitoyl cysteine intermediate is Cys124. A helical transmembrane segment spans residues 138–158 (PFLCLLLHSAGVLLHISVLLG). The Extracellular portion of the chain corresponds to 159–166 (PALSALLQ). Residues 167-187 (AHSALYTVALLLLPWLMLLTG) traverse the membrane as a helical segment. The Cytoplasmic segment spans residues 188-195 (KVSLAQFA). Residues 196–216 (LAFVVDTCVAGALLCGAGLLF) form a helical membrane-spanning segment. Residues 217–284 (HGMLLLRGQT…TPGDVGLVTS (68 aa)) lie on the Extracellular side of the membrane.

Belongs to the DHHC palmitoyltransferase family.

It localises to the membrane. It carries out the reaction L-cysteinyl-[protein] + hexadecanoyl-CoA = S-hexadecanoyl-L-cysteinyl-[protein] + CoA. Probable palmitoyltransferase that could catalyze the addition of palmitate onto various protein substrates. This is Probable palmitoyltransferase ZDHHC24 from Mus musculus (Mouse).